The chain runs to 547 residues: Natural resistance-associated macrophage protein 1 (547 aa).

The interval 1–30 is disordered; sequence MTGDKDPQSVSRPNYGSISHPPSSEPQQEP. Over 1 to 54 the chain is Cytoplasmic; it reads MTGDKDPQSVSRPNYGSISHPPSSEPQQEPLRTTYLSEKIPIPDTEPGTFSLRK. Over residues 8-17 the composition is skewed to polar residues; it reads QSVSRPNYGS. Residues 21-30 are compositionally biased toward low complexity; it reads PPSSEPQQEP. A helical transmembrane segment spans residues 55–75; that stretch reads LWAFTGPGFLMSIAFLDPGNI. Over 76-81 the chain is Extracellular; the sequence is ESDLQA. The chain crosses the membrane as a helical span at residues 82-102; sequence GAVAGFKLLWVLLWATVLGLL. The Cytoplasmic segment spans residues 103–139; sequence CQRLAARLGVVTGKDLGEICHLYYPKVPRTLLWLTIE. Residues 140–160 form a helical membrane-spanning segment; that stretch reads LAIVGSDMQEVIGTAIAFSLL. The Extracellular portion of the chain corresponds to 161–164; it reads SAGR. Residues 165–185 traverse the membrane as a helical segment; that stretch reads IPLWGGVLITIVDTFFFLFLD. Residues 186-193 lie on the Cytoplasmic side of the membrane; sequence NYGLRKLE. A helical membrane pass occupies residues 194–214; that stretch reads AFFGILITIMALTFGYEYVVA. Residues 215-240 lie on the Extracellular side of the membrane; it reads RPAQVALLQGLLLPSCPGCGRPELLQ. A helical transmembrane segment spans residues 241 to 261; that stretch reads AVGIVGAIIMPHNIYLHSALV. The Cytoplasmic segment spans residues 262-286; that stretch reads KSREIDRSRRPDIREANMYFLIEAS. The helical transmembrane segment at 287-307 threads the bilayer; that stretch reads IALSVSFFINLFVVAVFGQAF. The Extracellular portion of the chain corresponds to 308–346; the sequence is YQQTNEAAFNVCANSSLHDYAKIFPRNNLTVEVDIYQGG. Residues Asn321 and Asn335 are each glycosylated (N-linked (GlcNAc...) asparagine). A helical transmembrane segment spans residues 347–367; the sequence is VMLGCVFGPAALYIWAVGLLA. Residues 368–394 lie on the Cytoplasmic side of the membrane; that stretch reads AGQSSTMTGTYAGQFVMEGFLRLRWSR. The helical transmembrane segment at 395-415 threads the bilayer; the sequence is FARVLLTRSCAILPTVLVVVF. Over 416–432 the chain is Extracellular; sequence RDLKDLSGLNDLLNVLQ. A helical membrane pass occupies residues 433–453; that stretch reads SLLLPFAVLPILTFTSMPALM. Residues 454–464 are Cytoplasmic-facing; it reads QEFANGRLSKA. The chain crosses the membrane as a helical span at residues 465-485; it reads ITSFIMALVCAINLYFVVIYL. Residues 486–492 lie on the Extracellular side of the membrane; that stretch reads PSLPHPA. Residues 493 to 513 traverse the membrane as a helical segment; that stretch reads YFILVALLAIVYLGLTTYLVW. At 514–547 the chain is on the cytoplasmic side; sequence TCFIAHGVTLLAHSSHQHFLYGLPDVEEKGKISG.

The protein belongs to the NRAMP family.

Its subcellular location is the late endosome membrane. It is found in the lysosome membrane. It carries out the reaction Zn(2+)(in) + H(+)(out) = Zn(2+)(out) + H(+)(in). It catalyses the reaction Fe(2+)(in) + H(+)(out) = Fe(2+)(out) + H(+)(in). The enzyme catalyses Mn(2+)(in) + H(+)(out) = Mn(2+)(out) + H(+)(in). Its function is as follows. Macrophage-specific antiporter that fluxes metal ions in either direction against a proton gradient. Localized to late endosomal lysosomal membranes, delivers bivalent cations from the cytosol into these acidic compartments where they may directly affect antimicrobial activity. Involved in iron metabolism and host natural resistance to infection with intracellular parasites. Pathogen resistance involves sequestration of Fe(2+) and Mn(2+), cofactors of both prokaryotic and eukaryotic catalases and superoxide dismutases, not only to protect the macrophage against its own generation of reactive oxygen species, but to deny the cations to the pathogen for synthesis of its protective enzymes. The polypeptide is Natural resistance-associated macrophage protein 1 (SLC11A1) (Canis lupus familiaris (Dog)).